Reading from the N-terminus, the 311-residue chain is Malate dehydrogenase (311 aa).

NAD(+) contacts are provided by residues 7 to 13 (GAAGGIG) and Asp34. The substrate site is built by Arg81 and Arg87. Residues Asn94 and 117 to 119 (ITN) contribute to the NAD(+) site. Residues Asn119 and Arg153 each contribute to the substrate site. The Proton acceptor role is filled by His177. Met227 contacts NAD(+).

This sequence belongs to the LDH/MDH superfamily. MDH type 1 family. As to quaternary structure, homodimer.

It carries out the reaction (S)-malate + NAD(+) = oxaloacetate + NADH + H(+). In terms of biological role, catalyzes the reversible oxidation of malate to oxaloacetate. The chain is Malate dehydrogenase from Shewanella sp. (strain ANA-3).